Reading from the N-terminus, the 466-residue chain is Ribulose bisphosphate carboxylase large chain (466 aa).

The residue at position 5 (Lys5) is an N6,N6,N6-trimethyllysine. Asn114 and Thr164 together coordinate substrate. Lys166 functions as the Proton acceptor in the catalytic mechanism. A substrate-binding site is contributed by Lys168. Lys192, Asp194, and Glu195 together coordinate Mg(2+). At Lys192 the chain carries N6-carboxylysine. His285 serves as the catalytic Proton acceptor. Substrate contacts are provided by Arg286, His318, and Ser370.

It belongs to the RuBisCO large chain family. Type I subfamily. Heterohexadecamer of 8 large chains and 8 small chains; disulfide-linked. The disulfide link is formed within the large subunit homodimers. Mg(2+) is required as a cofactor. Post-translationally, the disulfide bond which can form in the large chain dimeric partners within the hexadecamer appears to be associated with oxidative stress and protein turnover.

The protein localises to the plastid. Its subcellular location is the chloroplast. The enzyme catalyses 2 (2R)-3-phosphoglycerate + 2 H(+) = D-ribulose 1,5-bisphosphate + CO2 + H2O. The catalysed reaction is D-ribulose 1,5-bisphosphate + O2 = 2-phosphoglycolate + (2R)-3-phosphoglycerate + 2 H(+). Functionally, ruBisCO catalyzes two reactions: the carboxylation of D-ribulose 1,5-bisphosphate, the primary event in carbon dioxide fixation, as well as the oxidative fragmentation of the pentose substrate in the photorespiration process. Both reactions occur simultaneously and in competition at the same active site. The polypeptide is Ribulose bisphosphate carboxylase large chain (Coriaria myrtifolia (Tanner's sumac)).